A 178-amino-acid polypeptide reads, in one-letter code: Bifunctional protein PyrR (178 aa).

The PRPP-binding signature appears at 99 to 111 (IILVDDVLFTGRT).

The protein belongs to the purine/pyrimidine phosphoribosyltransferase family. PyrR subfamily. Homodimer and homohexamer; in equilibrium.

The enzyme catalyses UMP + diphosphate = 5-phospho-alpha-D-ribose 1-diphosphate + uracil. Regulates transcriptional attenuation of the pyrimidine nucleotide (pyr) operon by binding in a uridine-dependent manner to specific sites on pyr mRNA. This disrupts an antiterminator hairpin in the RNA and favors formation of a downstream transcription terminator, leading to a reduced expression of downstream genes. In terms of biological role, also displays a weak uracil phosphoribosyltransferase activity which is not physiologically significant. This is Bifunctional protein PyrR from Clostridium novyi (strain NT).